A 241-amino-acid chain; its full sequence is Phosphoribosylaminoimidazole-succinocarboxamide synthase (241 aa).

It belongs to the SAICAR synthetase family.

It catalyses the reaction 5-amino-1-(5-phospho-D-ribosyl)imidazole-4-carboxylate + L-aspartate + ATP = (2S)-2-[5-amino-1-(5-phospho-beta-D-ribosyl)imidazole-4-carboxamido]succinate + ADP + phosphate + 2 H(+). Its pathway is purine metabolism; IMP biosynthesis via de novo pathway; 5-amino-1-(5-phospho-D-ribosyl)imidazole-4-carboxamide from 5-amino-1-(5-phospho-D-ribosyl)imidazole-4-carboxylate: step 1/2. This Oenococcus oeni (strain ATCC BAA-331 / PSU-1) protein is Phosphoribosylaminoimidazole-succinocarboxamide synthase.